Here is a 244-residue protein sequence, read N- to C-terminus: Secreted RxLR effector protein RXLR-C05 (244 aa).

Positions 1–21 are cleaved as a signal peptide; it reads MRGAFYVATAFLIASSTRTAA. The segment covering 37–46 has biased composition (basic and acidic residues); it reads LPVGDSDTKS. Positions 37-56 are disordered; the sequence is LPVGDSDTKSLPRRSLKGSG. Positions 50–68 match the RxLR-dEER motif; it reads RSLKGSGDRLEIPVAEEER.

This sequence belongs to the RxLR effector family.

It localises to the secreted. The protein resides in the host cytoplasm. Its subcellular location is the host nucleus. Functionally, secreted effector that suppresses pattern-triggered immunity (PTI) in plant host. The protein is Secreted RxLR effector protein RXLR-C05 of Plasmopara halstedii (Downy mildew of sunflower).